We begin with the raw amino-acid sequence, 707 residues long: Probable potassium transporter 17 (707 aa).

Residues 1–25 (MDLEAGSIRPRSDGEGGGPAAGRET) are disordered. Over 1–34 (MDLEAGSIRPRSDGEGGGPAAGRETDDSNVWKDL) the chain is Cytoplasmic. A helical transmembrane segment spans residues 35 to 55 (FLAYKTLGVVFGGLVTSPLYV). The Extracellular segment spans residues 56 to 71 (YPSMNLSSPTEADYLG). Asparagine 60 carries an N-linked (GlcNAc...) asparagine glycan. The chain crosses the membrane as a helical span at residues 72-92 (IYSIMFWTLTLIGVVKYVCIA). Residues 93–157 (LNADDHGEGG…FFEQSITARR (65 aa)) are Cytoplasmic-facing. The helical transmembrane segment at 158 to 178 (VLLFVAVLGMCMLIGDGILTP) threads the bilayer. The Extracellular portion of the chain corresponds to 179–194 (AISVLSAIDGIRGPFP). The chain crosses the membrane as a helical span at residues 195–215 (TVSKPVVEALSAAILIGLFLL). Topologically, residues 216–222 (QKYGTSK) are cytoplasmic. Residues 223–243 (VSFLFSPIMAAWTFTTPIIGL) traverse the membrane as a helical segment. Topologically, residues 244-276 (YSIVHYYPGIFKAISPYYIVHFFLRNKRQGWQL) are extracellular. Residues 277-297 (LGGTVLCITGAEAMFADLGHF) traverse the membrane as a helical segment. Over 298-305 (SKKAIQIA) the chain is Cytoplasmic. Residues 306–326 (FLSSIYPSLVLTYAGQTAYLI) traverse the membrane as a helical segment. Over 327–343 (NNVNDFGDGFYKFVPRP) the chain is Extracellular. Residues 344–364 (VYWPMFVVATLAAIVASQSLI) form a helical membrane-spanning segment. The Cytoplasmic portion of the chain corresponds to 365–402 (SATFSVIKQSVVLDYFPRVKVVHTSQHKEGEVYSPEIN). The helical transmembrane segment at 403–423 (YILMVLCVGVILGFGGGKAIG) threads the bilayer. Residues 424–427 (NAFG) lie on the Extracellular side of the membrane. Residues 428 to 448 (VVVIMVMLITTVLLTLVMIII) form a helical membrane-spanning segment. The Cytoplasmic segment spans residues 449–454 (WRTPLV). A helical membrane pass occupies residues 455–475 (LAGLYFVPFFIMEGAYVSAVF). Over 476–480 (TKIPE) the chain is Extracellular. The helical transmembrane segment at 481–501 (GGWLPFAVSITLAMIMFGWYY) threads the bilayer. Residues 502–707 (GRQRKFEYEM…RVEIGMLYKV (206 aa)) lie on the Cytoplasmic side of the membrane.

It belongs to the HAK/KUP transporter (TC 2.A.72.3) family.

The protein resides in the membrane. Functionally, high-affinity potassium transporter. In Oryza sativa subsp. japonica (Rice), this protein is Probable potassium transporter 17 (HAK17).